Reading from the N-terminus, the 644-residue chain is Protein ETHYLENE-INSENSITIVE 3-like 1b (644 aa).

2 disordered regions span residues 47–75 (QCVM…DDDV) and 97–131 (ELQL…KMSR). Positions 66–75 (AGEDDSDDDV) are enriched in acidic residues.

Belongs to the EIN3 family. As to expression, highly expressed in roots. Expressed at low levels in leaves and panicles.

Its subcellular location is the nucleus. In terms of biological role, transcription factor acting as a positive regulator in the ethylene response pathway. Involved in wound signaling by binding specifically to the DNA sequence 5'-ATGTACCT-3' found in the promoter of some wound-inducible genes. Binds directly to the DNA sequence 5'-TGTTACAAATACC-3' in the promoter of the GA20OX2 gene to activate its expression at the transcriptional level during ethylene signaling. This is Protein ETHYLENE-INSENSITIVE 3-like 1b from Oryza sativa subsp. japonica (Rice).